The primary structure comprises 1350 residues: ABC-type transporter MDR1 (1350 aa).

Residues 1–11 (MDTVHEGHHGS) show a composition bias toward basic and acidic residues. Residues 1–84 (MDTVHEGHHG…DEGEDPFAHL (84 aa)) form a disordered region. Polar residues predominate over residues 22 to 33 (VEVTNYEKTQLG). Residues 52-63 (KKHKSQKEKKHK) show a composition bias toward basic residues. The ABC transmembrane type-1 1 domain occupies 121-411 (VLSALSSIIG…VAPNIQAFTT (291 aa)). A run of 6 helical transmembrane segments spans residues 124-144 (ALSS…FGGL), 170-190 (LYFL…TAGF), 243-263 (KVGL…VSFI), 271-291 (ILMS…GFIV), 350-370 (GSMI…AFWM), and 380-400 (IEVG…FALG). Residues 446 to 691 (IELRNIRHIY…QGAYYNLVEA (246 aa)) enclose the ABC transporter 1 domain. An ATP-binding site is contributed by 481–488 (GESGSGKS). Positions 712 to 731 (KDQNLKHETTKGEQPEDGLK) are enriched in basic and acidic residues. The interval 712-734 (KDQNLKHETTKGEQPEDGLKLAR) is disordered. Transmembrane regions (helical) follow at residues 779–799 (IGII…VFFA), 830–850 (FMLA…FAVC), 903–923 (LGTI…SLAI), 929–949 (LVCI…FWML), 1014–1034 (ASQS…GTLI), and 1044–1064 (FFLC…IFSF). The 292-residue stretch at 779-1070 (IGIICSVITG…IFSFAPDMGK (292 aa)) folds into the ABC transmembrane type-1 2 domain. Residues 1105–1343 (IEFRDVHFRY…RGRYWELVNL (239 aa)) enclose the ABC transporter 2 domain. N-linked (GlcNAc...) asparagine glycosylation occurs at Asn-1127. Position 1140-1147 (1140-1147 (GASGCGKS)) interacts with ATP.

It belongs to the ABC transporter superfamily. ABCB family. Multidrug resistance exporter (TC 3.A.1.201) subfamily.

It localises to the cell membrane. Its function is as follows. ABC-type transporter that is involved in the secretion of liamocins, glycolipids (also called heavy oils) composed of a single mannitol or arabitol headgroup linked to either three, four or even six 3,5-dihydroxydecanoic ester tail-groups. The protein is ABC-type transporter MDR1 of Aureobasidium melanogenum (Aureobasidium pullulans var. melanogenum).